The following is a 301-amino-acid chain: Ankyrin repeat domain-containing protein 29 (301 aa).

8 ANK repeats span residues 11-41 (PLANAAFWAARRGNLALLKLLLNSGRVDVDC), 45-74 (HGTTLLMVAAYAGHIDCVRELVLQGADINL), 78-107 (SGTTALFFAAQQGHNDVVRFLFGFGASTEF), 111-140 (DGGTALLAASQYGHMQVVETLLKHGANIHD), 144-173 (DGATALFLAAQGGYLDVIRLLLASGAKVNQ), 177-206 (DGTAPLWIASQMGHSEVVRVMLLRGADRDA), 210-239 (DGTTALLKAANKGYNDVIKELLKFSPTLGI), and 242-271 (NGTSALHAAVLSGNIKTVALLLEAGADPSL).

This is Ankyrin repeat domain-containing protein 29 (ANKRD29) from Homo sapiens (Human).